Consider the following 1589-residue polypeptide: Polyhomeotic-proximal chromatin protein (1589 aa).

Residues 1-15 (MDRRALKFMQKRADT) are compositionally biased toward basic and acidic residues. Disordered stretches follow at residues 1-85 (MDRR…GGKQ), 107-174 (KYDV…NCNS), 252-290 (LQQQLSEANGGGAASAGAGGAASPANSQQSQQQQHSTAI), 1112-1244 (LSTA…STTT), and 1260-1294 (AVSTASTTTTSSGTFITSCTSTTTTTTSSISNGSK). 3 stretches are compositionally biased toward low complexity: residues 18-28 (DTTTPVSTTAS), 60-80 (NHNNNNSSQHSHSHQQQQQQQ), and 119-139 (AQQQATSGTGPATGSGSVTPT). The span at 154–174 (HTPSTPNRPSAPSTPNTNCNS) shows a compositional bias: polar residues. Residues 260–271 (NGGGAASAGAGG) are compositionally biased toward gly residues. Low complexity predominate over residues 272–285 (AASPANSQQSQQQQ). Phosphoserine is present on Ser-1145. Thr-1148 carries the post-translational modification Phosphothreonine. Residues 1157–1180 (TTPKSSTPATVSASVEASSSTGEA) are compositionally biased toward low complexity. Over residues 1189–1221 (RSSTPSKGATTPTSKQSNAAVQPPSSTTPNSVS) the composition is skewed to polar residues. Low complexity-rich tracts occupy residues 1230-1244 (TCGSLTSATSTSTTT) and 1260-1290 (AVSTASTTTTSSGTFITSCTSTTTTTTSSIS). The segment at 1356-1389 (SAPGSDMVACEQCGKMEHKAKLKRKRYCSPGCSR) adopts an FCS-type zinc-finger fold. Cys-1365, Cys-1368, Cys-1383, and Cys-1387 together coordinate Zn(2+). Residues 1513–1577 (WSVDDVSNFI…VAKVESIKEV (65 aa)) form the SAM domain.

In terms of assembly, component of PRC1 complex, which contains many PcG proteins like Pc, ph, Scm, Psc, Sce and also chromatin-remodeling proteins such as histone deacetylases. This complex is distinct from the Esc/E(z) complex, at least composed of esc, E(z), Su(z)12, HDAC1/Rpd3 and Caf1-55. The 2 complexes however cooperate and interact together during the first 3 hours of development to establish PcG silencing. Interacts with the SAM domain of Scm via its SAM domain in vitro. Interacts with Trl in vivo and with corto in vitro. As to expression, salivary glands.

The protein localises to the nucleus. In terms of biological role, polycomb group (PcG) protein. PcG proteins act by forming multiprotein complexes, which are required to maintain the transcriptionally repressive state of homeotic genes throughout development. PcG proteins are not required to initiate repression, but to maintain it during later stages of development. Component of the PcG multiprotein PRC1 complex, a complex that acts via chromatin remodeling and modification of histones; it mediates monoubiquitination of histone H2A 'Lys-118', rendering chromatin heritably changed in its expressibility. Plays a role in regulating the expression of other pair-rule genes such as eve, ftz, and H. In Drosophila melanogaster (Fruit fly), this protein is Polyhomeotic-proximal chromatin protein (ph-p).